Reading from the N-terminus, the 275-residue chain is NH(3)-dependent NAD(+) synthetase (275 aa).

50 to 57 (GISGGVDS) contacts ATP. Mg(2+) is bound at residue D56. R147 contacts deamido-NAD(+). Residue T167 coordinates ATP. E172 contributes to the Mg(2+) binding site. Residues K180 and D187 each contribute to the deamido-NAD(+) site. The ATP site is built by K196 and T218. Position 267–268 (267–268 (HK)) interacts with deamido-NAD(+).

The protein belongs to the NAD synthetase family. Homodimer.

The enzyme catalyses deamido-NAD(+) + NH4(+) + ATP = AMP + diphosphate + NAD(+) + H(+). The protein operates within cofactor biosynthesis; NAD(+) biosynthesis; NAD(+) from deamido-NAD(+) (ammonia route): step 1/1. Functionally, catalyzes the ATP-dependent amidation of deamido-NAD to form NAD. Uses ammonia as a nitrogen source. This is NH(3)-dependent NAD(+) synthetase from Pseudomonas aeruginosa (strain UCBPP-PA14).